The sequence spans 347 residues: Hyaluronidase conohyal-ad1 (347 aa).

Positions 1-18 are cleaved as a signal peptide; that stretch reads MRAVVVVTGLVVVVVTTT. The propeptide occupies 19 to 33; that stretch reads LSLQDHDVKSASSPL. The disordered stretch occupies residues 27-49; that stretch reads KSASSPLSSSVDQGSSGDDCDEG. Low complexity predominate over residues 28–43; the sequence is SASSPLSSSVDQGSSG. The cysteines at positions 67 and 343 are disulfide-linked. E150 functions as the Proton donor in the catalytic mechanism.

It belongs to the glycosyl hydrolase 56 family. Contains 4 disulfide bonds. Post-translationally, is N-linked glycosylated at three positions. As to expression, expressed by the venom duct.

It localises to the secreted. The catalysed reaction is Random hydrolysis of (1-&gt;4)-linkages between N-acetyl-beta-D-glucosamine and D-glucuronate residues in hyaluronate.. Hyaluronidase catalyzes the hydrolysis of hyaluronic acid (HA), an anionic, nonsulfated glycosaminoglycan distributed widely throughout connective, epithelial, and neural tissues. In venom, they are known to enhance diffusion of the venom by degrading the extracellular matrix. The protein is Hyaluronidase conohyal-ad1 of Conus adamsonii (Rhododendron cone).